A 188-amino-acid chain; its full sequence is MKVIASTLRKGNVVDKDGKLYVILTAENIHPGKGTPVTQLDMRRITDGVKISERYRTTEQVERAFVEDRDHTFLYQDGEGYHFMNPENYEQLAVPEDVVGDAAPYLQEGMVVTLSTHNGVPLAIELPQRVTLEIVETEPVTKGQTASSSYKPAILSNGVKTSVPPHITTGTRVVIMTADGAYVERAKD.

The protein belongs to the elongation factor P family.

The protein localises to the cytoplasm. It participates in protein biosynthesis; polypeptide chain elongation. Functionally, involved in peptide bond synthesis. Stimulates efficient translation and peptide-bond synthesis on native or reconstituted 70S ribosomes in vitro. Probably functions indirectly by altering the affinity of the ribosome for aminoacyl-tRNA, thus increasing their reactivity as acceptors for peptidyl transferase. This chain is Elongation factor P, found in Methylorubrum populi (strain ATCC BAA-705 / NCIMB 13946 / BJ001) (Methylobacterium populi).